The following is a 474-amino-acid chain: 3-isopropylmalate dehydratase large subunit (474 aa).

Residues C353, C413, and C416 each coordinate [4Fe-4S] cluster.

It belongs to the aconitase/IPM isomerase family. LeuC type 1 subfamily. In terms of assembly, heterodimer of LeuC and LeuD. The cofactor is [4Fe-4S] cluster.

It carries out the reaction (2R,3S)-3-isopropylmalate = (2S)-2-isopropylmalate. Its pathway is amino-acid biosynthesis; L-leucine biosynthesis; L-leucine from 3-methyl-2-oxobutanoate: step 2/4. In terms of biological role, catalyzes the isomerization between 2-isopropylmalate and 3-isopropylmalate, via the formation of 2-isopropylmaleate. This chain is 3-isopropylmalate dehydratase large subunit, found in Roseiflexus sp. (strain RS-1).